Here is an 87-residue protein sequence, read N- to C-terminus: HssA/B-like protein 57 (87 aa).

Belongs to the hssA/B family.

The polypeptide is HssA/B-like protein 57 (hssl57) (Dictyostelium discoideum (Social amoeba)).